A 68-amino-acid polypeptide reads, in one-letter code: U19-ctenitoxin-Pn1a (68 aa).

Q1 carries the post-translational modification Pyrrolidone carboxylic acid. Intrachain disulfides connect C8–C19, C13–C28, C18–C51, C38–C59, and C53–C65.

In terms of tissue distribution, expressed by the venom gland.

The protein localises to the secreted. In terms of biological role, non-toxic to mice and insects. In Phoneutria nigriventer (Brazilian armed spider), this protein is U19-ctenitoxin-Pn1a.